The chain runs to 477 residues: Aspartyl/glutamyl-tRNA(Asn/Gln) amidotransferase subunit B (477 aa).

This sequence belongs to the GatB/GatE family. GatB subfamily. Heterotrimer of A, B and C subunits.

The catalysed reaction is L-glutamyl-tRNA(Gln) + L-glutamine + ATP + H2O = L-glutaminyl-tRNA(Gln) + L-glutamate + ADP + phosphate + H(+). It catalyses the reaction L-aspartyl-tRNA(Asn) + L-glutamine + ATP + H2O = L-asparaginyl-tRNA(Asn) + L-glutamate + ADP + phosphate + 2 H(+). Functionally, allows the formation of correctly charged Asn-tRNA(Asn) or Gln-tRNA(Gln) through the transamidation of misacylated Asp-tRNA(Asn) or Glu-tRNA(Gln) in organisms which lack either or both of asparaginyl-tRNA or glutaminyl-tRNA synthetases. The reaction takes place in the presence of glutamine and ATP through an activated phospho-Asp-tRNA(Asn) or phospho-Glu-tRNA(Gln). This Clostridium tetani (strain Massachusetts / E88) protein is Aspartyl/glutamyl-tRNA(Asn/Gln) amidotransferase subunit B.